Here is a 557-residue protein sequence, read N- to C-terminus: MDSTVPSALELPQRLALNPRESPRSPEEEEPHLLSSLAAVQTLASVIRPCYGPHGRQKFLVTMKGETVCTGCATAILRALELEHPAAWLLREAGQTQAENSGDGTAFVVLLTEALLEQAEQLLKAGLPRPQLREAYATATAEVLATLPSLAIQSLGPLEDPSWALHSVMNTHTLSPMDHLTKLVAHACWAIKELDGSFKPERVGVCALPGGTLEDSCLLPGLAISGKLCGQMATVLSGARVALFACPFGPAHPNAPATARLSSPADLAQFSKGSDQLLEKQVGQLAAAGINVAVVLGEVDEETLTLADKYGIVVIQARSWMEIIYLSEVLDTPLLPRLLPPQRPGKCQRVYRQELGDGLAVVFEWECTGTPALTVVLRGATTQGLRSAEQAVYHGIDAYFQLCQDPRLIPGAGATEMALAKMLSDKGSRLEGPSGPAFLAFAWALKYLPKTLAENAGLAVSDVMAEMSGVHQGGNLLMGVGTEGIINVAQEGVWDTLIVKAQGFRAVAEVVLQLVTVDEIVVAKKSPTHQEIWNPDSKKTKKHPPPVETKKILGLNN.

Disordered regions lie at residues 1-33 (MDST…EPHL) and 531-557 (EIWN…GLNN).

This sequence belongs to the TCP-1 chaperonin family.

The protein resides in the cytoplasm. Its function is as follows. Possible molecular chaperone; assists the folding of proteins upon ATP hydrolysis. This is T-complex protein 1 subunit theta-like 2 (CCT8L2) from Homo sapiens (Human).